A 1091-amino-acid polypeptide reads, in one-letter code: AP-3 complex subunit beta-1 (1091 aa).

2 disordered regions span residues 1-32 (MSGNSFAYSEQAGGGEATELGQEATSTVSPSG) and 267-290 (EDNEKNFYESDDEQKEKTDQKKKP). Over residues 267-288 (EDNEKNFYESDDEQKEKTDQKK) the composition is skewed to basic and acidic residues. Residues S276 and S609 each carry the phosphoserine modification. The interval 664–807 (AGKAKKENPA…EKEKKTKEDR (144 aa)) is disordered. The segment covering 667–678 (AKKENPARKFYS) has biased composition (basic and acidic residues). Composition is skewed to acidic residues over residues 679–695 (DSEEEEDSSDSSSDSES) and 703–718 (EQDEEGDSSEDSSEDS). Residues 719 to 736 (SSEHRSDSESVSEVGDKR) show a composition bias toward basic and acidic residues. 2 positions are modified to phosphoserine: S748 and S750. Positions 763–775 (SDSSSTDSSSVEE) are enriched in low complexity. Residues 776–789 (SSSDSESESESESE) are compositionally biased toward acidic residues. Positions 790 to 807 (SESKKVTMEKEKKTKEDR) are enriched in basic and acidic residues.

The protein belongs to the adaptor complexes large subunit family. Adaptor protein complex 3 (AP-3) is a heterotetramer composed of two large adaptins (delta-type subunit AP3D1 and beta-type subunit AP3B1 or AP3B2), a medium adaptin (mu-type subunit AP3M1 or AP3M2) and a small adaptin (sigma-type subunit APS1 or AP3S2). AP-3 associates with the BLOC-1 complex. Interacts with KIF3A; interaction is direct; interaction is impaired by pyrophosphorylation of AP3B1. Phosphorylated on serine residues. Post-translationally, pyrophosphorylation by 5-diphosphoinositol pentakisphosphate (5-IP7) impairs interaction with KIF3A. Serine pyrophosphorylation is achieved by Mg(2+)-dependent, but enzyme independent transfer of a beta-phosphate from a inositol pyrophosphate to a pre-phosphorylated serine residue.

The protein localises to the cytoplasmic vesicle. The protein resides in the clathrin-coated vesicle membrane. Its subcellular location is the golgi apparatus. Functionally, subunit of non-clathrin- and clathrin-associated adaptor protein complex 3 (AP-3) that plays a role in protein sorting in the late-Golgi/trans-Golgi network (TGN) and/or endosomes. The AP complexes mediate both the recruitment of clathrin to membranes and the recognition of sorting signals within the cytosolic tails of transmembrane cargo molecules. AP-3 appears to be involved in the sorting of a subset of transmembrane proteins targeted to lysosomes and lysosome-related organelles. In concert with the BLOC-1 complex, AP-3 is required to target cargos into vesicles assembled at cell bodies for delivery into neurites and nerve terminals. The sequence is that of AP-3 complex subunit beta-1 (AP3B1) from Canis lupus familiaris (Dog).